Reading from the N-terminus, the 495-residue chain is Aspartyl/glutamyl-tRNA(Asn/Gln) amidotransferase subunit B (495 aa).

The protein belongs to the GatB/GatE family. GatB subfamily. In terms of assembly, heterotrimer of A, B and C subunits.

The catalysed reaction is L-glutamyl-tRNA(Gln) + L-glutamine + ATP + H2O = L-glutaminyl-tRNA(Gln) + L-glutamate + ADP + phosphate + H(+). It carries out the reaction L-aspartyl-tRNA(Asn) + L-glutamine + ATP + H2O = L-asparaginyl-tRNA(Asn) + L-glutamate + ADP + phosphate + 2 H(+). Functionally, allows the formation of correctly charged Asn-tRNA(Asn) or Gln-tRNA(Gln) through the transamidation of misacylated Asp-tRNA(Asn) or Glu-tRNA(Gln) in organisms which lack either or both of asparaginyl-tRNA or glutaminyl-tRNA synthetases. The reaction takes place in the presence of glutamine and ATP through an activated phospho-Asp-tRNA(Asn) or phospho-Glu-tRNA(Gln). This is Aspartyl/glutamyl-tRNA(Asn/Gln) amidotransferase subunit B from Methylocella silvestris (strain DSM 15510 / CIP 108128 / LMG 27833 / NCIMB 13906 / BL2).